The following is a 409-amino-acid chain: Peptidase T (409 aa).

Zn(2+) is bound at residue His-78. Residue Asp-80 is part of the active site. Residue Asp-140 coordinates Zn(2+). Glu-174 acts as the Proton acceptor in catalysis. Glu-175, Asp-197, and His-379 together coordinate Zn(2+).

The protein belongs to the peptidase M20B family. The cofactor is Zn(2+).

The protein resides in the cytoplasm. The catalysed reaction is Release of the N-terminal residue from a tripeptide.. Its function is as follows. Cleaves the N-terminal amino acid of tripeptides. The polypeptide is Peptidase T (Aliivibrio salmonicida (strain LFI1238) (Vibrio salmonicida (strain LFI1238))).